The following is a 138-amino-acid chain: Putative pre-16S rRNA nuclease (138 aa).

It belongs to the YqgF nuclease family.

It is found in the cytoplasm. Could be a nuclease involved in processing of the 5'-end of pre-16S rRNA. The polypeptide is Putative pre-16S rRNA nuclease (Caldicellulosiruptor saccharolyticus (strain ATCC 43494 / DSM 8903 / Tp8T 6331)).